The sequence spans 426 residues: Trigger factor (426 aa).

Positions 160–240 (GDTVIGDVTK…IKEVKHLELP (81 aa)) constitute a PPIase FKBP-type domain.

The protein belongs to the FKBP-type PPIase family. Tig subfamily.

It is found in the cytoplasm. The enzyme catalyses [protein]-peptidylproline (omega=180) = [protein]-peptidylproline (omega=0). Functionally, involved in protein export. Acts as a chaperone by maintaining the newly synthesized protein in an open conformation. Functions as a peptidyl-prolyl cis-trans isomerase. The polypeptide is Trigger factor (Chlorobaculum tepidum (strain ATCC 49652 / DSM 12025 / NBRC 103806 / TLS) (Chlorobium tepidum)).